We begin with the raw amino-acid sequence, 525 residues long: ATP synthase subunit alpha (525 aa).

169–176 (GDRQTGKT) contributes to the ATP binding site.

It belongs to the ATPase alpha/beta chains family. F-type ATPases have 2 components, CF(1) - the catalytic core - and CF(0) - the membrane proton channel. CF(1) has five subunits: alpha(3), beta(3), gamma(1), delta(1), epsilon(1). CF(0) has three main subunits: a(1), b(2) and c(9-12). The alpha and beta chains form an alternating ring which encloses part of the gamma chain. CF(1) is attached to CF(0) by a central stalk formed by the gamma and epsilon chains, while a peripheral stalk is formed by the delta and b chains.

The protein localises to the cell membrane. The enzyme catalyses ATP + H2O + 4 H(+)(in) = ADP + phosphate + 5 H(+)(out). Produces ATP from ADP in the presence of a proton gradient across the membrane. The alpha chain is a regulatory subunit. In Mycoplasma capricolum subsp. capricolum (strain California kid / ATCC 27343 / NCTC 10154), this protein is ATP synthase subunit alpha.